Reading from the N-terminus, the 257-residue chain is 3-methyl-2-oxobutanoate hydroxymethyltransferase (257 aa).

Mg(2+) is bound by residues D42 and D86. 3-methyl-2-oxobutanoate is bound by residues 42–43 (DS), D86, and K116. E118 provides a ligand contact to Mg(2+). E185 acts as the Proton acceptor in catalysis.

The protein belongs to the PanB family. As to quaternary structure, homodecamer; pentamer of dimers. Requires Mg(2+) as cofactor.

The protein resides in the cytoplasm. It carries out the reaction 3-methyl-2-oxobutanoate + (6R)-5,10-methylene-5,6,7,8-tetrahydrofolate + H2O = 2-dehydropantoate + (6S)-5,6,7,8-tetrahydrofolate. The protein operates within cofactor biosynthesis; (R)-pantothenate biosynthesis; (R)-pantoate from 3-methyl-2-oxobutanoate: step 1/2. Functionally, catalyzes the reversible reaction in which hydroxymethyl group from 5,10-methylenetetrahydrofolate is transferred onto alpha-ketoisovalerate to form ketopantoate. In Prochlorococcus marinus (strain AS9601), this protein is 3-methyl-2-oxobutanoate hydroxymethyltransferase.